Here is a 378-residue protein sequence, read N- to C-terminus: Anhydro-N-acetylmuramic acid kinase (378 aa).

Glycine 23 to aspartate 30 contributes to the ATP binding site.

Belongs to the anhydro-N-acetylmuramic acid kinase family.

The enzyme catalyses 1,6-anhydro-N-acetyl-beta-muramate + ATP + H2O = N-acetyl-D-muramate 6-phosphate + ADP + H(+). It functions in the pathway amino-sugar metabolism; 1,6-anhydro-N-acetylmuramate degradation. The protein operates within cell wall biogenesis; peptidoglycan recycling. Its function is as follows. Catalyzes the specific phosphorylation of 1,6-anhydro-N-acetylmuramic acid (anhMurNAc) with the simultaneous cleavage of the 1,6-anhydro ring, generating MurNAc-6-P. Is required for the utilization of anhMurNAc either imported from the medium or derived from its own cell wall murein, and thus plays a role in cell wall recycling. The chain is Anhydro-N-acetylmuramic acid kinase from Bordetella bronchiseptica (strain ATCC BAA-588 / NCTC 13252 / RB50) (Alcaligenes bronchisepticus).